A 223-amino-acid chain; its full sequence is Ribosomal RNA small subunit methyltransferase G (223 aa).

S-adenosyl-L-methionine contacts are provided by residues Gly-83, Leu-88, 134 to 135 (AE), and Arg-152.

This sequence belongs to the methyltransferase superfamily. RNA methyltransferase RsmG family.

The protein localises to the cytoplasm. Functionally, specifically methylates the N7 position of guanine in position 518 of 16S rRNA. The sequence is that of Ribosomal RNA small subunit methyltransferase G from Corynebacterium diphtheriae (strain ATCC 700971 / NCTC 13129 / Biotype gravis).